Here is a 492-residue protein sequence, read N- to C-terminus: Cytochrome P450 2B12 (492 aa).

Position 129 is a phosphoserine (Ser129). Cys437 serves as a coordination point for heme.

Belongs to the cytochrome P450 family. It depends on heme as a cofactor. Preputial gland, but not in liver.

It is found in the endoplasmic reticulum membrane. It localises to the microsome membrane. The enzyme catalyses an organic molecule + reduced [NADPH--hemoprotein reductase] + O2 = an alcohol + oxidized [NADPH--hemoprotein reductase] + H2O + H(+). In terms of biological role, cytochromes P450 are a group of heme-thiolate monooxygenases. In liver microsomes, this enzyme is involved in an NADPH-dependent electron transport pathway. This isozyme seems responsible for metabolism of 2,2',4,4',5,5'-hexachlorobiphenyl. This chain is Cytochrome P450 2B12 (Cyp2b12), found in Rattus norvegicus (Rat).